We begin with the raw amino-acid sequence, 187 residues long: Elongation factor P (187 aa).

It belongs to the elongation factor P family.

The protein localises to the cytoplasm. The protein operates within protein biosynthesis; polypeptide chain elongation. Involved in peptide bond synthesis. Stimulates efficient translation and peptide-bond synthesis on native or reconstituted 70S ribosomes in vitro. Probably functions indirectly by altering the affinity of the ribosome for aminoacyl-tRNA, thus increasing their reactivity as acceptors for peptidyl transferase. This Rhodococcus erythropolis (strain PR4 / NBRC 100887) protein is Elongation factor P.